Reading from the N-terminus, the 392-residue chain is Alkaline phosphatase L (392 aa).

The signal sequence occupies residues 1-23 (MYKRSLIAASLSVAALVSAQAMA).

This sequence belongs to the PstS family. Homodimer.

Its subcellular location is the secreted. It localises to the periplasm. The catalysed reaction is a phosphate monoester + H2O = an alcohol + phosphate. In terms of biological role, has both a phosphomonoesterase and phosphodiesterase activity. This Pseudomonas aeruginosa protein is Alkaline phosphatase L.